The following is a 154-amino-acid chain: Interleukin-2 (154 aa).

The signal sequence occupies residues 1-20 (MCKMQLLSCIALSLVLVANS). Thr-23 is a glycosylation site (O-linked (GalNAc...) threonine). Cys-78 and Cys-126 are disulfide-bonded.

It belongs to the IL-2 family.

It is found in the secreted. In terms of biological role, cytokine produced by activated CD4-positive helper T-cells and to a lesser extend activated CD8-positive T-cells and natural killer (NK) cells that plays pivotal roles in the immune response and tolerance. Binds to a receptor complex composed of either the high-affinity trimeric IL-2R (IL2RA/CD25, IL2RB/CD122 and IL2RG/CD132) or the low-affinity dimeric IL-2R (IL2RB and IL2RG). Interaction with the receptor leads to oligomerization and conformation changes in the IL-2R subunits resulting in downstream signaling starting with phosphorylation of JAK1 and JAK3. In turn, JAK1 and JAK3 phosphorylate the receptor to form a docking site leading to the phosphorylation of several substrates including STAT5. This process leads to activation of several pathways including STAT, phosphoinositide-3-kinase/PI3K and mitogen-activated protein kinase/MAPK pathways. Functions as a T-cell growth factor and can increase NK-cell cytolytic activity as well. Promotes strong proliferation of activated B-cells and subsequently immunoglobulin production. Plays a pivotal role in regulating the adaptive immune system by controlling the survival and proliferation of regulatory T-cells, which are required for the maintenance of immune tolerance. Moreover, participates in the differentiation and homeostasis of effector T-cell subsets, including Th1, Th2, Th17 as well as memory CD8-positive T-cells. This Mirounga angustirostris (Northern elephant seal) protein is Interleukin-2 (IL2).